The following is a 495-amino-acid chain: Ubiquinone biosynthesis monooxygenase COQ6, mitochondrial (495 aa).

The protein belongs to the UbiH/COQ6 family. In terms of assembly, component of a multi-subunit COQ enzyme complex. It depends on FAD as a cofactor.

Its subcellular location is the mitochondrion inner membrane. The catalysed reaction is a 4-hydroxy-3-(all-trans-polyprenyl)benzoate + 2 reduced [2Fe-2S]-[ferredoxin] + O2 + 2 H(+) = a 3,4-dihydroxy-5-(all-trans-polyprenyl)benzoate + 2 oxidized [2Fe-2S]-[ferredoxin] + H2O. It carries out the reaction a 2-methoxy-6-(all-trans-polyprenyl)phenol + 2 reduced [2Fe-2S]-[ferredoxin] + O2 + 2 H(+) = a 2-methoxy-6-(all-trans-polyprenyl)benzene-1,4-diol + 2 oxidized [2Fe-2S]-[ferredoxin] + H2O. It functions in the pathway cofactor biosynthesis; ubiquinone biosynthesis. FAD-dependent monooxygenase required for two non-consecutive steps during ubiquinone biosynthesis. Required for the C5-ring hydroxylation during ubiquinone biosynthesis by catalyzing the hydroxylation of 4-hydroxy-3-(all-trans-polyprenyl)benzoic acid to 3,4-dihydroxy-5-(all-trans-polyprenyl)benzoic acid. Also acts downstream of coq4, for the C1-hydroxylation during ubiquinone biosynthesis by catalyzing the hydroxylation of 2-methoxy-6-(all-trans-polyprenyl)phenol to 2-methoxy-6-(all-trans-polyprenyl)benzene-1,4-diol. The electrons required for the hydroxylation reaction are funneled indirectly to coq6 from NADPH via a ferredoxin/ferredoxin reductase system. The polypeptide is Ubiquinone biosynthesis monooxygenase COQ6, mitochondrial (Dictyostelium discoideum (Social amoeba)).